A 420-amino-acid chain; its full sequence is Glucose-1-phosphate adenylyltransferase (420 aa).

Alpha-D-glucose 1-phosphate-binding positions include Y107, G173, 188-189 (EK), and S206.

The protein belongs to the bacterial/plant glucose-1-phosphate adenylyltransferase family. In terms of assembly, homotetramer.

The catalysed reaction is alpha-D-glucose 1-phosphate + ATP + H(+) = ADP-alpha-D-glucose + diphosphate. It participates in glycan biosynthesis; glycogen biosynthesis. In terms of biological role, involved in the biosynthesis of ADP-glucose, a building block required for the elongation reactions to produce glycogen. Catalyzes the reaction between ATP and alpha-D-glucose 1-phosphate (G1P) to produce pyrophosphate and ADP-Glc. The protein is Glucose-1-phosphate adenylyltransferase of Shewanella frigidimarina (strain NCIMB 400).